The following is a 4451-amino-acid chain: Gramicidin S synthase 2 (4451 aa).

The interval 467-1044 (DKTIHQLFTE…IQEISNYING (578 aa)) is domain 1 (proline-activating). Carrier domains follow at residues 971 to 1046 (VPTN…NGAK), 2006 to 2081 (APSS…ADGQ), 3052 to 3127 (RPRT…EETD), and 4090 to 4165 (APRN…THQE). O-(pantetheine 4'-phosphoryl)serine occurs at positions 1006, 2041, 3087, and 4125. Positions 1521–2080 (DHVAVGWKDQ…SALAQYIADG (560 aa)) are domain 2 (valine-activating). The segment at 2538-3135 (YATNKIFHEL…TDTEQYMAIQ (598 aa)) is domain 3 (ornithine-activating). Positions 3591-4173 (IQELFEEQVK…QESENNVHQP (583 aa)) are domain 4 (leucine-activating).

Belongs to the ATP-dependent AMP-binding enzyme family. In terms of assembly, large multienzyme complex of GrsA and GrsB. Requires pantetheine 4'-phosphate as cofactor.

The protein operates within antibiotic biosynthesis; gramicidin S biosynthesis. This protein is a multifunctional enzyme, able to activate and polymerize the amino acids Pro, Val, Orn and Leu. Activation sites for these AA consist of individual domains. The polypeptide is Gramicidin S synthase 2 (grsB) (Aneurinibacillus migulanus (Bacillus migulanus)).